A 227-amino-acid chain; its full sequence is ATP-dependent Clp protease proteolytic subunit 1 (227 aa).

The active-site Nucleophile is Ser-124. His-149 is a catalytic residue.

The protein belongs to the peptidase S14 family. As to quaternary structure, fourteen ClpP subunits assemble into 2 heptameric rings which stack back to back to give a disk-like structure with a central cavity, resembling the structure of eukaryotic proteasomes.

It localises to the cytoplasm. It carries out the reaction Hydrolysis of proteins to small peptides in the presence of ATP and magnesium. alpha-casein is the usual test substrate. In the absence of ATP, only oligopeptides shorter than five residues are hydrolyzed (such as succinyl-Leu-Tyr-|-NHMec, and Leu-Tyr-Leu-|-Tyr-Trp, in which cleavage of the -Tyr-|-Leu- and -Tyr-|-Trp bonds also occurs).. Its function is as follows. Cleaves peptides in various proteins in a process that requires ATP hydrolysis. Has a chymotrypsin-like activity. Plays a major role in the degradation of misfolded proteins. The protein is ATP-dependent Clp protease proteolytic subunit 1 of Rhodopirellula baltica (strain DSM 10527 / NCIMB 13988 / SH1).